Here is a 360-residue protein sequence, read N- to C-terminus: Peptide chain release factor 1 (360 aa).

Position 235 is an N5-methylglutamine (glutamine 235). A compositionally biased stretch (basic and acidic residues) spans 284–295 (ERQEQAQADTRR). A disordered region spans residues 284-309 (ERQEQAQADTRRNLLGSGDRSDKIRT).

Belongs to the prokaryotic/mitochondrial release factor family. In terms of processing, methylated by PrmC. Methylation increases the termination efficiency of RF1.

The protein resides in the cytoplasm. In terms of biological role, peptide chain release factor 1 directs the termination of translation in response to the peptide chain termination codons UAG and UAA. The sequence is that of Peptide chain release factor 1 (prfA) from Pasteurella multocida (strain Pm70).